A 310-amino-acid polypeptide reads, in one-letter code: uncharacterized protein (310 aa).

His-239 is a catalytic residue.

It belongs to the IUNH family.

Its subcellular location is the cytoplasm. It is found in the nucleus. This is an uncharacterized protein from Schizosaccharomyces pombe (strain 972 / ATCC 24843) (Fission yeast).